A 151-amino-acid polypeptide reads, in one-letter code: MMTEEHTDLEARIIKDIHCKEIDLVNRDPKNINEDIVKVDFEDVIAEPEGTYSFDGVWRVSYTTFTVSKYWCYRLLSTLLGVPLALLWGFLFACISFCHIWAVVPCIKSYLIEIQCISHIYSLCIRTFCNPLFAALGQVCSNIKVVLRREG.

Residues 1–83 (MMTEEHTDLE…RLLSTLLGVP (83 aa)) lie on the Cytoplasmic side of the membrane. A Glycyl lysine isopeptide (Lys-Gly) (interchain with G-Cter in SUMO3) cross-link involves residue K38. The segment at residues 84-104 (LALLWGFLFACISFCHIWAVV) is an intramembrane region (helical). Over 105–151 (PCIKSYLIEIQCISHIYSLCIRTFCNPLFAALGQVCSNIKVVLRREG) the chain is Cytoplasmic.

This sequence belongs to the caveolin family. Homooligomer. Interacts with DYSF. Interacts with DLG1 and KCNA5; forms a ternary complex. Interacts with DAG1 (via its C-terminal); the interaction prevents binding of DAG1 with DMD. Interacts with TRIM72. Interacts with MUSK; may regulate MUSK signaling. Interacts with POPDC1. Interacts with CAVIN1, CAVIN2 and CAVIN4. Post-translationally, sumoylation with SUMO3 by PIAS4 may reduce agonist-induced internalization and desensitization of adrenergic receptor ABRD2. Expressed predominantly in muscle.

It is found in the golgi apparatus membrane. The protein localises to the cell membrane. The protein resides in the membrane. It localises to the caveola. Its subcellular location is the sarcolemma. Functionally, may act as a scaffolding protein within caveolar membranes. Interacts directly with G-protein alpha subunits and can functionally regulate their activity. May also regulate voltage-gated potassium channels. Plays a role in the sarcolemma repair mechanism of both skeletal muscle and cardiomyocytes that permits rapid resealing of membranes disrupted by mechanical stress. Mediates the recruitment of CAVIN2 and CAVIN3 proteins to the caveolae. This chain is Caveolin-3 (Cav3), found in Rattus norvegicus (Rat).